We begin with the raw amino-acid sequence, 412 residues long: Imidazolonepropionase (412 aa).

Fe(3+) contacts are provided by His-73 and His-75. 2 residues coordinate Zn(2+): His-73 and His-75. Residues Arg-82, Tyr-145, and His-178 each contribute to the 4-imidazolone-5-propanoate site. Tyr-145 provides a ligand contact to N-formimidoyl-L-glutamate. His-247 contributes to the Fe(3+) binding site. His-247 contributes to the Zn(2+) binding site. Position 250 (Gln-250) interacts with 4-imidazolone-5-propanoate. Asp-322 contacts Fe(3+). Residue Asp-322 participates in Zn(2+) binding. N-formimidoyl-L-glutamate is bound by residues Asn-324 and Gly-326. Ser-327 serves as a coordination point for 4-imidazolone-5-propanoate.

Belongs to the metallo-dependent hydrolases superfamily. HutI family. Zn(2+) serves as cofactor. Fe(3+) is required as a cofactor.

It localises to the cytoplasm. It catalyses the reaction 4-imidazolone-5-propanoate + H2O = N-formimidoyl-L-glutamate. Its pathway is amino-acid degradation; L-histidine degradation into L-glutamate; N-formimidoyl-L-glutamate from L-histidine: step 3/3. Functionally, catalyzes the hydrolytic cleavage of the carbon-nitrogen bond in imidazolone-5-propanoate to yield N-formimidoyl-L-glutamate. It is the third step in the universal histidine degradation pathway. The polypeptide is Imidazolonepropionase (Shewanella amazonensis (strain ATCC BAA-1098 / SB2B)).